A 474-amino-acid polypeptide reads, in one-letter code: Neuronal acetylcholine receptor subunit eat-2 (474 aa).

The N-terminal stretch at 1 to 21 is a signal peptide; it reads MTLKIAFFTLILLVSIERVYS. Over 22 to 237 the chain is Extracellular; it reads SDEEYRLLKD…MHLKRRTMYY (216 aa). An N-linked (GlcNAc...) asparagine glycan is attached at asparagine 95. Cysteine 149 and cysteine 163 are oxidised to a cystine. A run of 3 helical transmembrane segments spans residues 238–258, 266–286, and 303–323; these read GLNWIVPSILISLSNILGFTM, ITLQITNFLSVMVFLAMVSEV, and LSIVILGLSICASLIIVNIFF. Residues 324–440 are Cytoplasmic-facing; sequence RHPKTHRMGD…WRFMAMVIDR (117 aa). A disordered region spans residues 359–378; sequence PRREEEKNDEEAGGDGTKLL. A helical transmembrane segment spans residues 441–461; sequence LSLFLFTGLIFGTTALIFAFC.

The protein belongs to the ligand-gated ion channel (TC 1.A.9) family. Acetylcholine receptor (TC 1.A.9.1) subfamily. As to quaternary structure, neuronal AChR seems to be composed of two different type of subunits: alpha and beta. Expressed in pharyngeal muscle.

The protein localises to the postsynaptic cell membrane. Its subcellular location is the cell membrane. Functionally, after binding acetylcholine, the AChR responds by an extensive change in conformation that affects all subunits and leads to opening of an ion-conducting channel across the plasma membrane. Nicotinic acetylcholine receptor in the MC pharyngeal motor neuron involved in pharyngeal pumping. Has a role in the determination of life span possibly via calorific restriction which affects growth rate, although this is independent of metabolic activity. Plays a role in the defense against the accumulation of ingested live pathogenic bacteria in the intestine. The protein is Neuronal acetylcholine receptor subunit eat-2 of Caenorhabditis elegans.